Here is a 462-residue protein sequence, read N- to C-terminus: Acetyl-CoA decarbonylase/synthase complex subunit gamma (462 aa).

The region spanning 1–60 (MAQLSAMDVYNLLPKANCGACGCKTCMEFATKLVNREAKPEDCPKLDDESLEKLQELLAP) is the 4Fe-4S domain. The [4Fe-4S] cluster site is built by C18, C21, C26, and C43.

Heterodimer of delta and gamma chains. The ACDS complex is made up of alpha, epsilon, beta, gamma and delta chains with a probable stoichiometry of (alpha(2)epsilon(2))(4)-beta(8)-(gamma(1)delta(1))(8). Corrinoid is required as a cofactor. It depends on [4Fe-4S] cluster as a cofactor.

The catalysed reaction is 5,6,7,8-tetrahydrosarcinapterin + methyl-Co(III)-[corrinoid Fe-S protein] = 5-methyltetrahydrosarcinapterin + Co(I)-[corrinoid Fe-S protein] + H(+). Its function is as follows. Part of a complex that catalyzes the reversible cleavage of acetyl-CoA, allowing autotrophic growth from CO(2). In Methanopyrus kandleri (strain AV19 / DSM 6324 / JCM 9639 / NBRC 100938), this protein is Acetyl-CoA decarbonylase/synthase complex subunit gamma.